The chain runs to 178 residues: Nucleoside-triphosphatase THEP1 (178 aa).

Residues 9-16 (GPVGSIKA) and 101-108 (VIIIDEVG) each bind ATP.

It belongs to the THEP1 NTPase family.

It carries out the reaction a ribonucleoside 5'-triphosphate + H2O = a ribonucleoside 5'-diphosphate + phosphate + H(+). Its function is as follows. Has nucleotide phosphatase activity towards ATP, GTP, CTP, TTP and UTP. May hydrolyze nucleoside diphosphates with lower efficiency. The chain is Nucleoside-triphosphatase THEP1 from Thermoplasma volcanium (strain ATCC 51530 / DSM 4299 / JCM 9571 / NBRC 15438 / GSS1).